Reading from the N-terminus, the 172-residue chain is Inorganic pyrophosphatase (172 aa).

Substrate-binding residues include Lys26, Arg40, and Tyr52. Residues Asp62, Asp67, and Asp99 each coordinate Mg(2+). Position 138 (Tyr138) interacts with substrate.

This sequence belongs to the PPase family. As to quaternary structure, homohexamer. Mg(2+) is required as a cofactor.

It is found in the cytoplasm. The enzyme catalyses diphosphate + H2O = 2 phosphate + H(+). Catalyzes the hydrolysis of inorganic pyrophosphate (PPi) forming two phosphate ions. In Saccharolobus solfataricus (strain ATCC 35092 / DSM 1617 / JCM 11322 / P2) (Sulfolobus solfataricus), this protein is Inorganic pyrophosphatase.